A 425-amino-acid polypeptide reads, in one-letter code: Histidine--tRNA ligase (425 aa).

Belongs to the class-II aminoacyl-tRNA synthetase family. In terms of assembly, homodimer.

It is found in the cytoplasm. The catalysed reaction is tRNA(His) + L-histidine + ATP = L-histidyl-tRNA(His) + AMP + diphosphate + H(+). The protein is Histidine--tRNA ligase of Histophilus somni (strain 2336) (Haemophilus somnus).